The chain runs to 660 residues: Neurexin-2-beta (660 aa).

Gly residues predominate over residues 1–10 (MPPGGSGQGG). Residues 1-27 (MPPGGSGQGGCPRRPPALAGPLPPPPP) form a disordered region. An N-terminal signal peptide occupies residues 1-46 (MPPGGSGQGGCPRRPPALAGPLPPPPPPPPLPLLLGLLLLLGAAEG). The Extracellular portion of the chain corresponds to 47–584 (ARVSSSLSTT…EVIRESSSTT (538 aa)). In terms of domain architecture, Laminin G-like spans 87-295 (TTYIFGKGGA…HLRLVGEGPS (209 aa)). Ca(2+) is bound by residues D139 and V156. N-linked (GlcNAc...) asparagine glycosylation is present at N186. Ca(2+) is bound by residues I238 and N240. Residue S350 is glycosylated (O-linked (Xyl...) (heparan sulfate) serine). Disordered regions lie at residues 408–458 (ATQD…LPPT) and 537–571 (EPRR…RGPP). N561 carries an N-linked (GlcNAc...) asparagine glycan. The helical transmembrane segment at 585–605 (GMVVGIVAAAALCILILLYAM) threads the bilayer. Residues 606 to 660 (YKYRNRDEGSYQVDQSRNYISNSAQSNGAVVKEKAPAAPKTPSKAKKNKDKEYYV) are Cytoplasmic-facing. The disordered stretch occupies residues 627–660 (NSAQSNGAVVKEKAPAAPKTPSKAKKNKDKEYYV).

The protein belongs to the neurexin family. In terms of assembly, interacts (via cytoplasmic C-terminal region) with CASK. Specific isoforms bind alpha-dystroglycan and neuroligins NLGN1, NLGN2 and NLGN3. Interacts with CBLN1, CBLN2 and, less avidly, with CBLN4. Interacts with CLSTN3. O-glycosylated; contains heparan sulfate. Heparan sulfate attachment is required for synapse development by mediating interactions with neuroligins.

Its subcellular location is the presynaptic cell membrane. Its function is as follows. Neuronal cell surface protein that may be involved in cell recognition and cell adhesion. This chain is Neurexin-2-beta, found in Mus musculus (Mouse).